The chain runs to 367 residues: rRNA processing protein RCL1 (367 aa).

Residue S2 is modified to N-acetylserine.

It belongs to the RNA 3'-terminal cyclase family. Type 2 subfamily. Interacts directly with BMS1 and the U3 snoRNA to form a stable subcomplex. Component of the 90S small subunit processome also known as 90S pre-ribosome that consists of the 35S pre-rRNA, early-associating ribosomal proteins most of which are part of the small ribosomal subunit, the U3 snoRNA and associated proteins.

The protein resides in the nucleus. It is found in the nucleolus. In terms of biological role, does not have cyclase activity. Plays a role in 40S-ribosomal-subunit biogenesis in the early pre-rRNA processing steps at sites A0, A1 and A2 that are required for proper maturation of the 18S RNA. RCL1 activates BMS1 by promoting GDP/GTP exchange. This Saccharomyces cerevisiae (strain ATCC 204508 / S288c) (Baker's yeast) protein is rRNA processing protein RCL1 (RCL1).